The following is a 244-amino-acid chain: Transmembrane protein 176A (244 aa).

Residue S42 is modified to Phosphoserine. The next 4 membrane-spanning stretches (helical) occupy residues V60 to G80, S92 to L112, A122 to I142, and L204 to W224.

It belongs to the TMEM176 family. As to quaternary structure, interacts with MCOLN2. As to expression, specifically expressed in lung, kidney and spleen.

The protein localises to the membrane. This Mus musculus (Mouse) protein is Transmembrane protein 176A (Tmem176a).